The sequence spans 339 residues: Uroporphyrinogen decarboxylase (339 aa).

Residues 21 to 25, Asp-71, Tyr-147, Ser-202, and His-315 each bind substrate; that span reads RQAGR.

It belongs to the uroporphyrinogen decarboxylase family. In terms of assembly, homodimer.

The protein localises to the cytoplasm. It carries out the reaction uroporphyrinogen III + 4 H(+) = coproporphyrinogen III + 4 CO2. It functions in the pathway porphyrin-containing compound metabolism; protoporphyrin-IX biosynthesis; coproporphyrinogen-III from 5-aminolevulinate: step 4/4. Functionally, catalyzes the decarboxylation of four acetate groups of uroporphyrinogen-III to yield coproporphyrinogen-III. The polypeptide is Uroporphyrinogen decarboxylase (Helicobacter pylori (strain Shi470)).